We begin with the raw amino-acid sequence, 166 residues long: Large ribosomal subunit protein uL10 (166 aa).

The protein belongs to the universal ribosomal protein uL10 family. Part of the ribosomal stalk of the 50S ribosomal subunit. The N-terminus interacts with L11 and the large rRNA to form the base of the stalk. The C-terminus forms an elongated spine to which L12 dimers bind in a sequential fashion forming a multimeric L10(L12)X complex.

Functionally, forms part of the ribosomal stalk, playing a central role in the interaction of the ribosome with GTP-bound translation factors. This is Large ribosomal subunit protein uL10 from Bacillus licheniformis (strain ATCC 14580 / DSM 13 / JCM 2505 / CCUG 7422 / NBRC 12200 / NCIMB 9375 / NCTC 10341 / NRRL NRS-1264 / Gibson 46).